The following is a 249-amino-acid chain: Putative TrmH family tRNA/rRNA methyltransferase (249 aa).

G196, I216, and L225 together coordinate S-adenosyl-L-methionine.

It belongs to the class IV-like SAM-binding methyltransferase superfamily. RNA methyltransferase TrmH family.

The chain is Putative TrmH family tRNA/rRNA methyltransferase from Staphylococcus epidermidis (strain ATCC 35984 / DSM 28319 / BCRC 17069 / CCUG 31568 / BM 3577 / RP62A).